The sequence spans 1082 residues: MSWDDAIDGVDRDTPGGRMPRGWTVAARLRAANDDITHAAVADTLPAYAELHCLSDFSFLRGASSAEQLFARAHHCGYSALAITDECSLAGIVRGLEASRATGVQLIVGSEFTLVDGTRFVLLVENAHGYPQLCSVITTGRRAAGKGAYRLGRAEVEAHFRDVVPGVFALWLPGDQPQAEQGAWLQRVFAERAFLAVELHREQDDAARLQALQALAQQLGMSALASGDVQMAQRRDRIVQDTLTAIRHTLPLADCGAHLFRNGERHLRPRRALGNIYPHALLQASVELAQRCTFDLSKVQYTYPRELVPQGHTPASYLRQLTEAGMRERWPEGAPAQVVAQIDSELELIAYKGYEAFFLTVQDVVRFARAQGILCQGRGSSANSAVCYALGITAVNPSETRLLMARFLSKERDEPPDIDVDFEHERREEVLQYVYTKYGRERAALAATVICYRGKSAVRDVAKAFGLPPDQIALLANCYGWGNGDTPMEQRIAEAGFDLANPLINKILAVTEHLRDHPRHLSQHVGGFVISDEPLSMLVPVENAAMADRTIIQWDKDDLETMKLLKVDCLALGMLTCIRKTLDLVRGHRGRDYTIATLPGEDAATYKMIQRADTVGVFQIESRAQMAMLPRLKPREFYDLVIEVAIVRPGPIQGDMVHPYLRRRQGYEPVSFPSPGVEEILGRTLGIPLFQEQVMELVIHAGYTDSEADQLRRSMAAWRRGGDMEPHRVRIRELMAGRGYAPEFIDQIFEQIKGFGSYGFPQSHAASFAKLVYASCWLKRHEPAAFACGLLNAQPMGFYSASQIVQDARRGSPERQRVEVLPVDVLHSDWDNILVGGRPWHSDADPGEQPAIRLGLRQVSGLSEKVVERIVAARAQRPFADIGDLCLRAALDEKARLALAEAGALQSMVGNRNAARWAMAGVEARRPLLPGSPAERAVELPAPRAGEEILADYRAVGLSLRQHPMALLRPQMLQRRILGLRELQARRHGSGVHVAGLVTQRQRPATAKGTIFVTLEDEHGMINVIVWSHLAMRRRRALLESRLLAVRGRWERVDGVEHLIAGDLYDLSDLLGEMQLPSRDFH.

The protein belongs to the DNA polymerase type-C family. DnaE2 subfamily.

Its subcellular location is the cytoplasm. It catalyses the reaction DNA(n) + a 2'-deoxyribonucleoside 5'-triphosphate = DNA(n+1) + diphosphate. Functionally, DNA polymerase involved in damage-induced mutagenesis and translesion synthesis (TLS). It is not the major replicative DNA polymerase. This is Error-prone DNA polymerase from Xanthomonas campestris pv. campestris (strain 8004).